The following is a 172-amino-acid chain: Interferon tau-3 (172 aa).

Disulfide bonds link Cys1–Cys99 and Cys29–Cys139. The N-linked (GlcNAc...) asparagine glycan is linked to Asn78.

This sequence belongs to the alpha/beta interferon family. IFN-alphaII subfamily. Constitutively and exclusively expressed in the mononuclear cells of the extraembryonic trophectoderm.

The protein localises to the secreted. Paracrine hormone primarily responsible for maternal recognition of pregnancy. Interacts with endometrial receptors, probably type I interferon receptors, and blocks estrogen receptor expression, preventing the estrogen-induced increase in oxytocin receptor expression in the endometrium. This results in the suppression of the pulsatile endometrial release of the luteolytic hormone prostaglandin F2-alpha, hindering the regression of the corpus luteum (luteolysis) and therefore a return to ovarian cyclicity. This, and a possible direct effect of IFN-tau on prostaglandin synthesis, leads in turn to continued ovarian progesterone secretion, which stimulates the secretion by the endometrium of the nutrients required for the growth of the conceptus. In summary, displays particularly high antiviral and antiproliferative potency concurrently with particular weak cytotoxicity, high antiluteolytic activity and immunomodulatory properties. In contrast with other IFNs, IFN-tau is not virally inducible. This is Interferon tau-3 (IFNT3) from Bos taurus (Bovine).